The sequence spans 294 residues: Elongation factor Ts (294 aa).

Positions 82 to 85 are involved in Mg(2+) ion dislocation from EF-Tu; the sequence is TDFV.

The protein belongs to the EF-Ts family.

The protein localises to the cytoplasm. Its function is as follows. Associates with the EF-Tu.GDP complex and induces the exchange of GDP to GTP. It remains bound to the aminoacyl-tRNA.EF-Tu.GTP complex up to the GTP hydrolysis stage on the ribosome. This is Elongation factor Ts from Psychrobacter cryohalolentis (strain ATCC BAA-1226 / DSM 17306 / VKM B-2378 / K5).